Reading from the N-terminus, the 134-residue chain is Small ribosomal subunit protein uS8c (134 aa).

Belongs to the universal ribosomal protein uS8 family. As to quaternary structure, part of the 30S ribosomal subunit.

The protein resides in the plastid. It is found in the chloroplast. One of the primary rRNA binding proteins, it binds directly to 16S rRNA central domain where it helps coordinate assembly of the platform of the 30S subunit. This Gossypium hirsutum (Upland cotton) protein is Small ribosomal subunit protein uS8c (rps8).